Reading from the N-terminus, the 486-residue chain is Glutamyl-tRNA(Gln) amidotransferase subunit A (486 aa).

Catalysis depends on charge relay system residues Lys76 and Ser151. The active-site Acyl-ester intermediate is Ser175.

It belongs to the amidase family. GatA subfamily. In terms of assembly, heterotrimer of A, B and C subunits.

The catalysed reaction is L-glutamyl-tRNA(Gln) + L-glutamine + ATP + H2O = L-glutaminyl-tRNA(Gln) + L-glutamate + ADP + phosphate + H(+). Allows the formation of correctly charged Gln-tRNA(Gln) through the transamidation of misacylated Glu-tRNA(Gln) in organisms which lack glutaminyl-tRNA synthetase. The reaction takes place in the presence of glutamine and ATP through an activated gamma-phospho-Glu-tRNA(Gln). The polypeptide is Glutamyl-tRNA(Gln) amidotransferase subunit A (Chromohalobacter salexigens (strain ATCC BAA-138 / DSM 3043 / CIP 106854 / NCIMB 13768 / 1H11)).